The primary structure comprises 163 residues: UPF0763 protein C8J_0930 (163 aa).

It belongs to the UPF0763 family.

The polypeptide is UPF0763 protein C8J_0930 (Campylobacter jejuni subsp. jejuni serotype O:6 (strain 81116 / NCTC 11828)).